Consider the following 137-residue polypeptide: Small ribosomal subunit protein uS9 (137 aa).

It belongs to the universal ribosomal protein uS9 family.

This Sulfurisphaera tokodaii (strain DSM 16993 / JCM 10545 / NBRC 100140 / 7) (Sulfolobus tokodaii) protein is Small ribosomal subunit protein uS9 (rps9).